The primary structure comprises 512 residues: GMP synthase [glutamine-hydrolyzing] (512 aa).

Residues 5–195 enclose the Glutamine amidotransferase type-1 domain; it reads GIVILDFGSQ…IFGIAKAEKN (191 aa). C82 serves as the catalytic Nucleophile. Active-site residues include H169 and E171. A GMPS ATP-PPase domain is found at 196-387; the sequence is WSMENYIEST…LGIPDYMVDR (192 aa). Residue 223 to 229 coordinates ATP; the sequence is SGGVDSS.

As to quaternary structure, homodimer.

The catalysed reaction is XMP + L-glutamine + ATP + H2O = GMP + L-glutamate + AMP + diphosphate + 2 H(+). Its pathway is purine metabolism; GMP biosynthesis; GMP from XMP (L-Gln route): step 1/1. Its function is as follows. Catalyzes the synthesis of GMP from XMP. The sequence is that of GMP synthase [glutamine-hydrolyzing] from Fusobacterium nucleatum subsp. nucleatum (strain ATCC 25586 / DSM 15643 / BCRC 10681 / CIP 101130 / JCM 8532 / KCTC 2640 / LMG 13131 / VPI 4355).